The following is a 452-amino-acid chain: Putative zinc metalloprotease VC_2253 (452 aa).

Zn(2+) is bound at residue H22. Residue E23 is part of the active site. H26 contributes to the Zn(2+) binding site. A helical transmembrane segment spans residues 98–120 (SAIVSAGPIFNFLFAIFAYWLVF). The 96-residue stretch at 197 to 292 (NLRDWNFDPE…QVELTLIPDS (96 aa)) folds into the PDZ domain. Helical transmembrane passes span 378-400 (FVYF…LVPL) and 428-447 (MGYR…AIFN).

It belongs to the peptidase M50B family. The cofactor is Zn(2+).

The protein localises to the cell inner membrane. In Vibrio cholerae serotype O1 (strain ATCC 39315 / El Tor Inaba N16961), this protein is Putative zinc metalloprotease VC_2253.